The following is a 1531-amino-acid chain: Slit homolog 1 protein (1531 aa).

Positions 1–33 are cleaved as a signal peptide; that stretch reads MALTPQRGSSSGLSRPELWLLLWAAAWRLGATA. The LRRNT domain maps to 34–61; that stretch reads CPALCTCTGTTVDCHGTGLQAIPKNIPR. 6 LRR repeats span residues 62–83, 86–107, 110–131, 134–155, 158–179, and 182–203; these read NTERLELNGNNITRIHKNDFAG, QLRVLQLMENQIGAVERGAFDD, ELERLRLNRNQLQVLPELLFQN, ALSRLDLSENSLQAVPRKAFRG, DLKNLQLDKNQISCIEEGAFRA, and GLEVLTLNNNNITTIPVSSFNH. An N-linked (GlcNAc...) asparagine glycan is attached at Asn-72. N-linked (GlcNAc...) asparagine glycosylation is present at Asn-192. Residues 215–265 enclose the LRRCT 1 domain; that stretch reads NHLFCDCHLAWLSQWLRQRPTIGLFTQCSGPASLRGLNVAEVQKSEFSCSG. The region spanning 273 to 309 is the LRRNT 2 domain; sequence PACTLSSGSCPAMCSCSNGIVDCRGKGLTAIPANLPE. Cysteines 286 and 295 form a disulfide. 5 LRR repeats span residues 310 to 331, 334 to 355, 358 to 379, 382 to 403, and 406 to 427; these read TMTEIRLELNGIKSIPPGAFSP, KLRRIDLSNNQIAEIAPDAFQG, SLNSLVLYGNKITDLPRGVFGG, TLQLLLLNANKINCIRPDAFQD, and NLSLLSLYDNKIQSLAKGTFTS. Asn-406 carries an N-linked (GlcNAc...) asparagine glycan. The region spanning 439 to 489 is the LRRCT 2 domain; that stretch reads NPFICDCNLKWLADFLRTNPIETTGARCASPRRLANKRIGQIKSKKFRCSA. 4 disulfide bridges follow: Cys-443/Cys-466, Cys-445/Cys-487, Cys-513/Cys-519, and Cys-517/Cys-526. Residues 504–540 enclose the LRRNT 3 domain; the sequence is NSECTSDVACPHKCRCEASVVECSGLKLSKIPERIPQ. LRR repeat units lie at residues 541–562, 566–587, 590–611, 614–635, and 638–659; these read STTELRLNNNEISILEATGLFK, HLKKINLSNNKVSEIEDGTFEG, SVSELHLTANQLESVRSGMFRG, GLRTLMLRNNRISCIHNDSFTG, and NVRLLSLYDNHITTISPGAFDT. Asn-571 carries N-linked (GlcNAc...) asparagine glycosylation. The N-linked (GlcNAc...) asparagine glycan is linked to Asn-630. The region spanning 671–721 is the LRRCT 3 domain; sequence NPFNCNCQLAWLGDWLRKRKIVTGNPRCQNPDFLRQIPLQDVAFPDFRCEE. Cystine bridges form between Cys-675–Cys-698 and Cys-677–Cys-719. In terms of domain architecture, LRRNT 4 spans 725–761; the sequence is EVGCLPRPQCPQECACLDTVVRCSNKHLQALPKGIPK. 3 N-linked (GlcNAc...) asparagine glycosylation sites follow: Asn-762, Asn-801, and Asn-806. LRR repeat units follow at residues 762-783, 785-806, 809-830, and 833-854; these read NVTELYLDGNQFTLVPGQLSTF, YLQLVDLSNNKISSLSNSSFTN, QLTTLILSYNALQCIPPLAFQG, and SLRLLSLHGNDVSTLQEGIFAD. One can recognise an LRRCT 4 domain in the interval 866–916; sequence NPLYCDCHLRWLSSWVKTGYKEPGIARCAGPPEMEGKLLLTTPAKKFECQG. EGF-like domains are found at residues 927 to 962, 964 to 1003, 1005 to 1041, 1043 to 1081, 1083 to 1119, and 1124 to 1160; these read DPCLSSPCQNQGTCHNDPLEVYRCTCPSGYKGRNCE, SLDSCSSNPCGNGGTCHAQEGEDAGFTCSCPSGFEGLTCG, NTDDCVKHDCVNGGVCVDGIGNYTCQCPLQYTGRACE, LVDFCSPDLNPCQHEAQCVGTPEGPRCECVPGYTGDNCS, NQDDCKDHQCQNGAQCVDEINSYACLCAEGYSGQLCE, and PRNSCEGTECQNGANCVDQGSRPVCQCLPGFGGPECE. 18 disulfide bridges follow: Cys-929–Cys-940, Cys-934–Cys-950, Cys-952–Cys-961, Cys-968–Cys-979, Cys-973–Cys-991, Cys-993–Cys-1002, Cys-1009–Cys-1020, Cys-1014–Cys-1029, Cys-1031–Cys-1040, Cys-1047–Cys-1060, Cys-1054–Cys-1069, Cys-1071–Cys-1080, Cys-1087–Cys-1098, Cys-1092–Cys-1107, Cys-1109–Cys-1118, Cys-1128–Cys-1139, Cys-1133–Cys-1148, and Cys-1150–Cys-1159. Asn-1026 is a glycosylation site (N-linked (GlcNAc...) asparagine). An N-linked (GlcNAc...) asparagine glycan is attached at Asn-1079. Residues 1163 to 1336 enclose the Laminin G-like domain; sequence LSVNFVDRDT…QMKPGVVPGC (174 aa). Residues Asn-1186, Asn-1256, and Asn-1303 are each glycosylated (N-linked (GlcNAc...) asparagine). Disulfide bonds link Cys-1310-Cys-1336, Cys-1339-Cys-1349, Cys-1344-Cys-1359, Cys-1361-Cys-1370, Cys-1378-Cys-1388, Cys-1383-Cys-1398, Cys-1400-Cys-1409, Cys-1419-Cys-1429, Cys-1424-Cys-1439, Cys-1441-Cys-1450, Cys-1456-Cys-1495, Cys-1474-Cys-1509, Cys-1485-Cys-1525, and Cys-1489-Cys-1527. EGF-like domains lie at 1337–1371, 1374–1410, and 1415–1451; these read EPCRKLYCLHGICQPNATPGPVCHCEAGWGGLHCD, VDGPCHGHKCVHGKCVPLDALAYSCQCQDGYSGALCN, and VAEPCGGLQCLHGHCQASATRGAHCVCSPGFSGELCE. Positions 1456–1531 constitute a CTCK domain; it reads CRGDPVRDFH…PTKCGCAPCA (76 aa).

As to quaternary structure, interacts with ROBO1 and GREM1. In adult brains expressed in the hippocampus, cerebral cortex, and olfactory bulb but not in the cerebellum. In embryo expressed in cerebral cortex.

Its subcellular location is the secreted. Its function is as follows. Thought to act as molecular guidance cue in cellular migration, and function appears to be mediated by interaction with roundabout homolog receptors. During neural development involved in axonal navigation at the ventral midline of the neural tube and projection of axons to different regions. SLIT1 and SLIT2 together seem to be essential for midline guidance in the forebrain by acting as repulsive signal preventing inappropriate midline crossing by axons projecting from the olfactory bulb. The protein is Slit homolog 1 protein (Slit1) of Rattus norvegicus (Rat).